The chain runs to 424 residues: L-glutamine:2-deoxy-scyllo-inosose aminotransferase (424 aa).

Position 202 is an N6-(pyridoxal phosphate)lysine (K202).

This sequence belongs to the DegT/DnrJ/EryC1 family. L-glutamine:2-deoxy-scyllo-inosose/scyllo-inosose aminotransferase subfamily. Pyridoxal 5'-phosphate is required as a cofactor.

The enzyme catalyses 2-deoxy-L-scyllo-inosose + L-glutamine = 2-deoxy-scyllo-inosamine + 2-oxoglutaramate. It catalyses the reaction 3-amino-2,3-dideoxy-scyllo-inosose + L-glutamine = 2-deoxystreptamine + 2-oxoglutaramate. The protein operates within metabolic intermediate biosynthesis; 2-deoxystreptamine biosynthesis; 2-deoxystreptamine from D-glucose 6-phosphate: step 2/4. It functions in the pathway metabolic intermediate biosynthesis; 2-deoxystreptamine biosynthesis; 2-deoxystreptamine from D-glucose 6-phosphate: step 4/4. It participates in antibiotic biosynthesis; paromomycin biosynthesis. Catalyzes the PLP-dependent transamination of 2-deoxy-scyllo-inosose (2-DOI) to form 2-deoxy-scyllo-inosamine (2-DOIA) using L-glutamine as the amino donor. Also catalyzes the transamination of 3-amino-2,3-dideoxy-scyllo-inosose (keto-2-DOIA) into 2-deoxystreptamine (2-DOS). This is L-glutamine:2-deoxy-scyllo-inosose aminotransferase (parS) from Streptomyces paromomycinus (Streptomyces rimosus subsp. paromomycinus).